The following is a 724-amino-acid chain: MDENKTKPTGKCPVMHGGNTSTGSSNTDWWPNALNLDILHQHDTKTNPLGSDFSYREALKTLDVDALKKDLHALMTDSQEWWPADWGHYGGLMIRMAWHSAGSYRTTDGRGGGGTGNQRFAPLNSWPDNVSLDKARRLLWPIKRKYGNKLSWADLIILAGTIAYESMGLKTFGFAFGREDIWQPEKDTYWGAEKEWLANSTERYGSDDRTSLENPLAAVQMGLIYVNPEGVDGKSDPLRTAQDMRVTFSRMAMNDEETVALTAGGHTVGKTHGNGDASLLGAAPESADVEEQGLGWHNPTGSGKGRYTVTSGLEGAWTTHPTQWDNGFFQMLLNHEWELRKSPAGASQWEPVSIKEEDKPVDVEDPSIRYNPMMTDADMALKVDPEYRKISERFSRDQAYFSEVFARAWFKLTHRDMGPKARYVGPDVPQEDLLWQDPVPAGRTDYDVDLVKARIAESSLSISELVATAWDSARTFRGSDMRGGANGARIRLAPQKDWVGNEPARLARVLVVLESIAAATGASVADTIVLAGNVGIEKAAKAAGVQVTVPFAPGRGDTTDALTDVESFDVLEPIHDGYRNWLKKDYAVSVEELMLDRTQLMGLTANEMTVLVGGLRVLGTNYGGTKHGVFTDREGALTNDFFVNLTDMKYTWKPYRKDLYEIRDRKTGEVKWTATRLDLVFGSNSILRAYAEVYAQDDSKEKFVNDFVAAWVKVMNADRFDLAE.

The segment at 1 to 26 (MDENKTKPTGKCPVMHGGNTSTGSSN) is disordered. Positions 98–225 (WHSAGSYRTT…LAAVQMGLIY (128 aa)) form a cross-link, tryptophyl-tyrosyl-methioninium (Trp-Tyr) (with M-251). His-99 acts as the Proton acceptor in catalysis. The tryptophyl-tyrosyl-methioninium (Tyr-Met) (with W-98) cross-link spans 225 to 251 (YVNPEGVDGKSDPLRTAQDMRVTFSRM). His-266 is a binding site for heme b.

This sequence belongs to the peroxidase family. Peroxidase/catalase subfamily. Homodimer or homotetramer. Heme b is required as a cofactor. Formation of the three residue Trp-Tyr-Met cross-link is important for the catalase, but not the peroxidase activity of the enzyme.

It catalyses the reaction H2O2 + AH2 = A + 2 H2O. The enzyme catalyses 2 H2O2 = O2 + 2 H2O. Bifunctional enzyme with both catalase and broad-spectrum peroxidase activity. The sequence is that of Catalase-peroxidase from Pectobacterium atrosepticum (strain SCRI 1043 / ATCC BAA-672) (Erwinia carotovora subsp. atroseptica).